The sequence spans 432 residues: MRVVILGSGVVGVASAWYLNQAGHEVTVIDREPGAALETSAANAGQISPGYAAPWAAPGVPLKAIKWMFQRHAPLAVRLDGTQFQLKWMWQMLRNCDTSHYMENKGRMVRLAEYSRDCLKALRAETNIQYEGRQGGTLQLFRTEQQYENATRDIAVLEDAGVPYQLLESSRLAEVDPALAEVAHKLTGGLQLPNDETGDCQLFTQNLARMAEQAGVKFRFNTPVDQLLCDGEQIYGVKFGDEVIKADAYVMAFGSYSTAMLKGIVDIPVYPLKGYSLTIPIAQEDGAPVSTILDETYKIAITRFDNRIRVGGMAEIVGFNTELLQPRRETLEMVVRDLYPRGGHVEQATFWTGLRPMTPDGTPVVGSTRFKNLWLNTGHGTLGWTMACGSGQLLSDLLSGRTPAIPYEDLSVARYSRGFTPSRPGHLHGAHS.

3 to 17 provides a ligand contact to FAD; it reads VVILGSGVVGVASAW.

This sequence belongs to the DadA oxidoreductase family. The cofactor is FAD.

The enzyme catalyses a D-alpha-amino acid + A + H2O = a 2-oxocarboxylate + AH2 + NH4(+). It functions in the pathway amino-acid degradation; D-alanine degradation; NH(3) and pyruvate from D-alanine: step 1/1. Its function is as follows. Oxidative deamination of D-amino acids. This is D-amino acid dehydrogenase from Shigella boydii serotype 4 (strain Sb227).